A 506-amino-acid polypeptide reads, in one-letter code: Trans-cinnamate 4-monooxygenase (506 aa).

Residues 3–23 traverse the membrane as a helical segment; the sequence is LLLLEKALLGLFAAAVVAIAV. Residues 213–218 and Ala-306 each bind (E)-cinnamate; that span reads RSRLAQ. Cys-447 lines the heme pocket.

The protein belongs to the cytochrome P450 family. Heme is required as a cofactor.

The protein resides in the membrane. The enzyme catalyses (E)-cinnamate + reduced [NADPH--hemoprotein reductase] + O2 = (E)-4-coumarate + oxidized [NADPH--hemoprotein reductase] + H2O + H(+). Its pathway is phenylpropanoid metabolism; trans-4-coumarate biosynthesis; trans-4-coumarate from trans-cinnamate: step 1/1. In terms of biological role, catalyzes the first oxidative step of the phenylpropanoid pathway in higher plants by transforming trans-cinnamate into p-coumarate. The compounds formed by this pathway are essential components for lignification, pollination, and defense against ultraviolet light, predators and pathogens. In Ruta graveolens (Common rue), this protein is Trans-cinnamate 4-monooxygenase (CYP73A2).